The primary structure comprises 320 residues: o-succinylbenzoate synthase (320 aa).

Lys-133 serves as the catalytic Proton donor. 3 residues coordinate Mg(2+): Asp-161, Glu-190, and Asp-213. Lys-235 acts as the Proton acceptor in catalysis.

This sequence belongs to the mandelate racemase/muconate lactonizing enzyme family. MenC type 1 subfamily. It depends on a divalent metal cation as a cofactor.

It catalyses the reaction (1R,6R)-6-hydroxy-2-succinyl-cyclohexa-2,4-diene-1-carboxylate = 2-succinylbenzoate + H2O. It participates in quinol/quinone metabolism; 1,4-dihydroxy-2-naphthoate biosynthesis; 1,4-dihydroxy-2-naphthoate from chorismate: step 4/7. The protein operates within quinol/quinone metabolism; menaquinone biosynthesis. Its function is as follows. Converts 2-succinyl-6-hydroxy-2,4-cyclohexadiene-1-carboxylate (SHCHC) to 2-succinylbenzoate (OSB). The sequence is that of o-succinylbenzoate synthase from Salmonella choleraesuis (strain SC-B67).